A 76-amino-acid chain; its full sequence is Histone H2A (76 aa).

The segment at 1–23 is disordered; that stretch reads MSGRGKTGGKARAKAKTRSSRAG. N-acetylserine; in acipensins is present on Ser2. Ser2 carries the N-acetylserine; in histone H2A modification. At Ser2 the chain carries Phosphoserine; in histone H2A. Residue Lys6 is modified to N6-(2-hydroxyisobutyryl)lysine. Lys6 carries the post-translational modification N6-acetyllysine; in histone H2A. Over residues 7 to 19 the composition is skewed to basic residues; it reads TGGKARAKAKTRS. Lys10 carries the N6-(2-hydroxyisobutyryl)lysine; alternate modification. An N6-lactoyllysine; alternate modification is found at Lys10. An N6-succinyllysine modification is found at Lys10. Residues Lys14 and Lys16 each participate in a glycyl lysine isopeptide (Lys-Gly) (interchain with G-Cter in ubiquitin); in histone H2A cross-link. At Lys37 the chain carries N6-(2-hydroxyisobutyryl)lysine; alternate. Lys65 and Lys66 each carry N6-(2-hydroxyisobutyryl)lysine.

It belongs to the histone H2A family. As to quaternary structure, the nucleosome is a histone octamer containing two molecules each of H2A, H2B, H3 and H4 assembled in one H3-H4 heterotetramer and two H2A-H2B heterodimers. The octamer wraps approximately 147 bp of DNA. Phosphorylation on Ser-2 is enhanced during mitosis. Phosphorylation on Ser-2 directly represses transcription.

Its subcellular location is the nucleus. It localises to the chromosome. In terms of biological role, core component of nucleosome. Nucleosomes wrap and compact DNA into chromatin, limiting DNA accessibility to the cellular machineries which require DNA as a template. Histones thereby play a central role in transcription regulation, DNA repair, DNA replication and chromosomal stability. DNA accessibility is regulated via a complex set of post-translational modifications of histones, also called histone code, and nucleosome remodeling. Its function is as follows. Acipensins are antimicrobial peptides. Acipensins 1 and 2 have antibacterial activity against Gram-positive bacteria L.monocytogenes EGD (MIC are 1.1 uM and 1.0 uM, respectively) and S.aureus ATCC 33591 (MIC are 0.9 uM and 0.6 uM, respectively), against Gram-negative bacterium E.coli ML-35p (MIC are 0.7 uM and 0.3 uM, respectively) and antifungal activity against C.albicans 820 (MIC are 1.0 uM and 0.9 uM, respectively). Acipensin 6 has antibacterial activity against Gram-negative bacterium E.coli ML-35p (MIC=2.5 uM). Antimicrobial activity is reduced by high ionic strength. Acipensins 1, 2 and 6 have no hemolytic (up to 40 uM) or cytotoxic (up to 20 uM) effects on human cells in vitro. In Acipenser gueldenstaedtii (Russian sturgeon), this protein is Histone H2A.